The sequence spans 813 residues: MGNYSTKIDEKWQKKWEENSLYKFNNKNLDKKLYVLEMFSYPSGSKLHAGHWFNYGPVDSWARFKRMQGYNVFQPMGFDAFGLPAENYAIKTGIHPKDSTFKNIETMETQLKAMGAMFNWENEVITCSPDYYKWTQWLFLKLYEKGLAYKKKAPVNWCPSCNTVLANEQVLDGKCERCDSNVDKKNLEQWFLKITDYADELLEKLDELDWPEKTKAMQKHWIGKSVGAEVTFNVADSDLSFNVFTTRVDTLFGVTYVVLAPENDLVDKLTTPENKAEVESYKTQAKNQSDIERQSITREKTGVFSGSYAINPINGKKVPIWIGDYVLNTYGTGCVMAVPAHDERDFAFATKYNLPIERVIEGGDSLPYTEYGGMVNSGEFDGLLGNEAKEAVISKLESMNLGRKKINYRLRDWLVSRQRYWGAPIPIIYCEKCGTVEVPIEQLPVELPYNVEFSPDGKSPLGKCDDFINTTCPKCGGPAKREADTLDTFVCSSWYYLRYPDNNNEKDAFNPELINKMLPVDKYVGGPEHACMHLLYARFITKALRDMGYLNFDEPFLSLTHQGLILGPDGLKMSKSKGNTISPDDYIKEFGADVFRMYLMFGFDYTEGGAWSDDAIKSIGKFVDRVERILENAREEIKNSKDNKSTMDKDEKELNYVRHHSIKSITEDIDKMQFNTSIARLMEFTNALSKYLGIDAIKNALFLRESIIDFITLLAPFAPHFAEEQWKLIGINSSIFNEKWPEFDPKALIKDEVEIAVQVNGKIRAKINISTSSSEDEIKESALNNEDIKNSIGDKEIKKVIVIKNRLVNIVAK.

The 'HIGH' region motif lies at 40–51; that stretch reads SYPSGSKLHAGH. The 'KMSKS' region motif lies at 572–576; the sequence is KMSKS. Residue lysine 575 participates in ATP binding.

Belongs to the class-I aminoacyl-tRNA synthetase family.

It localises to the cytoplasm. It carries out the reaction tRNA(Leu) + L-leucine + ATP = L-leucyl-tRNA(Leu) + AMP + diphosphate. In Clostridium botulinum (strain ATCC 19397 / Type A), this protein is Leucine--tRNA ligase.